Here is a 1551-residue protein sequence, read N- to C-terminus: Pentafunctional AROM polypeptide (1551 aa).

The interval 1–379 is 3-dehydroquinate synthase; the sequence is MSIEKVPILG…YQLKAHQVSK (379 aa). Residues 42–44, 80–83, 111–113, and Asp116 contribute to the NAD(+) site; these read DTN, ENNK, and GGV. Arg127 lines the 7-phospho-2-dehydro-3-deoxy-D-arabino-heptonate pocket. 136-137 contributes to the NAD(+) binding site; the sequence is TT. The 7-phospho-2-dehydro-3-deoxy-D-arabino-heptonate site is built by Asp143 and Lys149. Lys158 lines the NAD(+) pocket. Asn159 is a binding site for 7-phospho-2-dehydro-3-deoxy-D-arabino-heptonate. Residues 176 to 179 and Asn187 contribute to the NAD(+) site; that span reads FLET. Residue Glu191 coordinates Zn(2+). Residues 191–194 and Lys243 contribute to the 7-phospho-2-dehydro-3-deoxy-D-arabino-heptonate site; that span reads EVVK. The active-site Proton acceptor; for 3-dehydroquinate synthase activity is the Glu253. Residues 257–261 and His264 each bind 7-phospho-2-dehydro-3-deoxy-D-arabino-heptonate; that span reads RNLLN. Zn(2+) is bound at residue His264. His268 acts as the Proton acceptor; for 3-dehydroquinate synthase activity in catalysis. His280 and Lys351 together coordinate 7-phospho-2-dehydro-3-deoxy-D-arabino-heptonate. Residue His280 participates in Zn(2+) binding. Residues 392-838 form an EPSP synthase region; sequence VHPFTNPPKE…WDILHSKFKI (447 aa). A shikimate kinase region spans residues 858–1048; that stretch reads DKSIIVIGMR…VPAGRSAAVV (191 aa). ATP is bound at residue 865 to 872; that stretch reads GMRGTGKS. The 3-dehydroquinase stretch occupies residues 1049-1258; that stretch reads LTSPDLNEVV…NDEEFLTIGE (210 aa). Arg1194 (schiff-base intermediate with substrate; for 3-dehydroquinate dehydratase activity) is an active-site residue. Residues 1271-1551 form a shikimate dehydrogenase region; that stretch reads AKKFWVIGSP…EIIHRAVVEE (281 aa).

The protein in the N-terminal section; belongs to the sugar phosphate cyclases superfamily. Dehydroquinate synthase family. It in the 2nd section; belongs to the EPSP synthase family. In the 3rd section; belongs to the shikimate kinase family. This sequence in the 4th section; belongs to the type-I 3-dehydroquinase family. The protein in the C-terminal section; belongs to the shikimate dehydrogenase family. As to quaternary structure, homodimer. Zn(2+) is required as a cofactor.

The protein resides in the cytoplasm. It carries out the reaction 7-phospho-2-dehydro-3-deoxy-D-arabino-heptonate = 3-dehydroquinate + phosphate. The catalysed reaction is 3-dehydroquinate = 3-dehydroshikimate + H2O. It catalyses the reaction shikimate + NADP(+) = 3-dehydroshikimate + NADPH + H(+). The enzyme catalyses shikimate + ATP = 3-phosphoshikimate + ADP + H(+). It carries out the reaction 3-phosphoshikimate + phosphoenolpyruvate = 5-O-(1-carboxyvinyl)-3-phosphoshikimate + phosphate. It functions in the pathway metabolic intermediate biosynthesis; chorismate biosynthesis; chorismate from D-erythrose 4-phosphate and phosphoenolpyruvate: step 2/7. It participates in metabolic intermediate biosynthesis; chorismate biosynthesis; chorismate from D-erythrose 4-phosphate and phosphoenolpyruvate: step 3/7. Its pathway is metabolic intermediate biosynthesis; chorismate biosynthesis; chorismate from D-erythrose 4-phosphate and phosphoenolpyruvate: step 4/7. The protein operates within metabolic intermediate biosynthesis; chorismate biosynthesis; chorismate from D-erythrose 4-phosphate and phosphoenolpyruvate: step 5/7. It functions in the pathway metabolic intermediate biosynthesis; chorismate biosynthesis; chorismate from D-erythrose 4-phosphate and phosphoenolpyruvate: step 6/7. The AROM polypeptide catalyzes 5 consecutive enzymatic reactions in prechorismate polyaromatic amino acid biosynthesis. This Candida albicans (strain SC5314 / ATCC MYA-2876) (Yeast) protein is Pentafunctional AROM polypeptide.